Here is a 231-residue protein sequence, read N- to C-terminus: Uracil-DNA glycosylase (231 aa).

The active-site Proton acceptor is the D74.

This sequence belongs to the uracil-DNA glycosylase (UDG) superfamily. UNG family.

Its subcellular location is the cytoplasm. The catalysed reaction is Hydrolyzes single-stranded DNA or mismatched double-stranded DNA and polynucleotides, releasing free uracil.. In terms of biological role, excises uracil residues from the DNA which can arise as a result of misincorporation of dUMP residues by DNA polymerase or due to deamination of cytosine. This chain is Uracil-DNA glycosylase, found in Campylobacter jejuni (strain RM1221).